The primary structure comprises 358 residues: Probable protein phosphatase 2C 34 (358 aa).

The PPM-type phosphatase domain maps to 62 to 349; that stretch reads LASVFSRRGE…DDISAVCLFF (288 aa). Residues Asp-98, Gly-99, Asp-294, and Asp-340 each coordinate Mn(2+).

The protein belongs to the PP2C family. Mg(2+) is required as a cofactor. The cofactor is Mn(2+).

The enzyme catalyses O-phospho-L-seryl-[protein] + H2O = L-seryl-[protein] + phosphate. It carries out the reaction O-phospho-L-threonyl-[protein] + H2O = L-threonyl-[protein] + phosphate. The sequence is that of Probable protein phosphatase 2C 34 from Arabidopsis thaliana (Mouse-ear cress).